The sequence spans 339 residues: Phenylalanine--tRNA ligase alpha subunit (339 aa).

Glu-247 contributes to the Mg(2+) binding site.

It belongs to the class-II aminoacyl-tRNA synthetase family. Phe-tRNA synthetase alpha subunit type 1 subfamily. As to quaternary structure, tetramer of two alpha and two beta subunits. Mg(2+) serves as cofactor.

It is found in the cytoplasm. The catalysed reaction is tRNA(Phe) + L-phenylalanine + ATP = L-phenylalanyl-tRNA(Phe) + AMP + diphosphate + H(+). The chain is Phenylalanine--tRNA ligase alpha subunit from Deinococcus geothermalis (strain DSM 11300 / CIP 105573 / AG-3a).